The chain runs to 176 residues: ATP-dependent protease subunit HslV (176 aa).

Threonine 2 is a catalytic residue. Residues glycine 157, cysteine 160, and threonine 163 each coordinate Na(+).

This sequence belongs to the peptidase T1B family. HslV subfamily. In terms of assembly, a double ring-shaped homohexamer of HslV is capped on each side by a ring-shaped HslU homohexamer. The assembly of the HslU/HslV complex is dependent on binding of ATP.

The protein localises to the cytoplasm. It carries out the reaction ATP-dependent cleavage of peptide bonds with broad specificity.. Allosterically activated by HslU binding. Functionally, protease subunit of a proteasome-like degradation complex believed to be a general protein degrading machinery. This Enterobacter sp. (strain 638) protein is ATP-dependent protease subunit HslV.